A 162-amino-acid chain; its full sequence is Large ribosomal subunit protein bL17 (162 aa).

The interval 126 to 162 is disordered; it reads KKEEVKTKSRRGGKAKKAEPTTEAPANTTEETTDSAE. Residues 146-155 are compositionally biased toward low complexity; it reads TTEAPANTTE.

The protein belongs to the bacterial ribosomal protein bL17 family. In terms of assembly, part of the 50S ribosomal subunit. Contacts protein L32.

This is Large ribosomal subunit protein bL17 from Flavobacterium psychrophilum (strain ATCC 49511 / DSM 21280 / CIP 103535 / JIP02/86).